The primary structure comprises 283 residues: 4-diphosphocytidyl-2-C-methyl-D-erythritol kinase (283 aa).

Residue K13 is part of the active site. P96–S106 provides a ligand contact to ATP. D138 is a catalytic residue.

This sequence belongs to the GHMP kinase family. IspE subfamily.

It carries out the reaction 4-CDP-2-C-methyl-D-erythritol + ATP = 4-CDP-2-C-methyl-D-erythritol 2-phosphate + ADP + H(+). It functions in the pathway isoprenoid biosynthesis; isopentenyl diphosphate biosynthesis via DXP pathway; isopentenyl diphosphate from 1-deoxy-D-xylulose 5-phosphate: step 3/6. In terms of biological role, catalyzes the phosphorylation of the position 2 hydroxy group of 4-diphosphocytidyl-2C-methyl-D-erythritol. The protein is 4-diphosphocytidyl-2-C-methyl-D-erythritol kinase of Pseudomonas fluorescens (strain Pf0-1).